A 551-amino-acid polypeptide reads, in one-letter code: Periplasmic [NiFe] hydrogenase large subunit (551 aa).

Ni(2+)-binding residues include Cys65, Cys68, Cys530, and Cys533. The propeptide occupies 537–551 (VIDPESNQVHKFRIL).

It belongs to the [NiFe]/[NiFeSe] hydrogenase large subunit family. As to quaternary structure, heterodimer of a large and a small subunit. The cofactor is Ni(2+).

The protein localises to the periplasm. The catalysed reaction is 2 Fe(III)-[cytochrome c3] + H2 = 2 Fe(II)-[cytochrome c3] + 2 H(+). This is Periplasmic [NiFe] hydrogenase large subunit (hydB) from Megalodesulfovibrio gigas (Desulfovibrio gigas).